Consider the following 425-residue polypeptide: Paired box pox-neuro protein (425 aa).

Positions 5–132 form a DNA-binding region, paired; that stretch reads GQAGVNQLGG…SSINRILRNS (128 aa). A PAI subdomain region spans residues 8–64; it reads GVNQLGGVFVNGRPLPDCVRRRIVDLALCGVRPCDISRQLLVSHGCVSKILTRFYET. The interval 84–132 is RED subdomain; that stretch reads TVVKKIIRLKEENSGMFAWEIREQLQQQRVCDPSSVPSISSINRILRNS. Disordered stretches follow at residues 159-188, 297-358, and 383-425; these read QAGSGPSNGYGGQAPPPPVTVAPPTPAATP, TKSE…RKRN, and LESS…EVVN. Residues 172-185 are compositionally biased toward pro residues; it reads APPPPVTVAPPTPA. Composition is skewed to low complexity over residues 323–332 and 340–349; these read SSPAALSLTA and GSAPEASPGS. Over residues 402-425 the composition is skewed to acidic residues; it reads TPEDEDPAEAEEEQEEEDSVEVVN.

Central and peripheral nervous systems.

The protein resides in the nucleus. In terms of biological role, transcriptional regulator that specifies poly-innervated organs (chemosensory bristle). Also controls the number of neurons. The sequence is that of Paired box pox-neuro protein (Poxn) from Drosophila melanogaster (Fruit fly).